The sequence spans 458 residues: tRNA-2-methylthio-N(6)-dimethylallyladenosine synthase (458 aa).

The region spanning 15–134 (KKVFIKTYGC…LPDLLEQTKQ (120 aa)) is the MTTase N-terminal domain. [4Fe-4S] cluster-binding residues include cysteine 24, cysteine 60, cysteine 97, cysteine 175, cysteine 179, and cysteine 182. In terms of domain architecture, Radical SAM core spans 161 to 393 (RKRGVSAFLT…QVLLLEQQNA (233 aa)). A TRAM domain is found at 396-457 (RSKIGQTTDV…SNSFVGEMTN (62 aa)).

Belongs to the methylthiotransferase family. MiaB subfamily. As to quaternary structure, monomer. [4Fe-4S] cluster is required as a cofactor.

The protein resides in the cytoplasm. The catalysed reaction is N(6)-dimethylallyladenosine(37) in tRNA + (sulfur carrier)-SH + AH2 + 2 S-adenosyl-L-methionine = 2-methylsulfanyl-N(6)-dimethylallyladenosine(37) in tRNA + (sulfur carrier)-H + 5'-deoxyadenosine + L-methionine + A + S-adenosyl-L-homocysteine + 2 H(+). In terms of biological role, catalyzes the methylthiolation of N6-(dimethylallyl)adenosine (i(6)A), leading to the formation of 2-methylthio-N6-(dimethylallyl)adenosine (ms(2)i(6)A) at position 37 in tRNAs that read codons beginning with uridine. The polypeptide is tRNA-2-methylthio-N(6)-dimethylallyladenosine synthase (Bartonella henselae (strain ATCC 49882 / DSM 28221 / CCUG 30454 / Houston 1) (Rochalimaea henselae)).